The chain runs to 181 residues: Diphosphoinositol polyphosphate phosphohydrolase NUDT4B (181 aa).

Substrate contacts are provided by residues R10, 18-20 (KKR), and 39-41 (SSR). Positions 18–145 (KKRAACLCFR…VHAEYLEKLK (128 aa)) constitute a Nudix hydrolase domain. Mg(2+) is bound by residues G50 and E66. A Nudix box motif is present at residues 51 to 72 (GGMEPEEEPGGAAVREVYEEAG). E69 functions as the Proton acceptor in the catalytic mechanism. E70 provides a ligand contact to Mg(2+). Substrate is bound by residues 90–92 (RKH), R116, and K134.

The protein belongs to the Nudix hydrolase family. DIPP subfamily. It depends on Mg(2+) as a cofactor. The cofactor is Mn(2+).

The protein localises to the cytoplasm. It catalyses the reaction diphospho-myo-inositol polyphosphate + H2O = myo-inositol polyphosphate + phosphate.. Cleaves a beta-phosphate from the diphosphate groups in PP-InsP5 (diphosphoinositol pentakisphosphate), PP-InsP4 and [PP]2-InsP4 (bisdiphosphoinositol tetrakisphosphate), suggesting that it may play a role in signal transduction. Also able to catalyze the hydrolysis of dinucleoside oligophosphate Ap6A, but not Ap5A. The major reaction products are ADP and p4a from Ap6A. Also able to hydrolyze 5-phosphoribose 1-diphosphate. Does not play a role in U8 snoRNA decapping activity. Binds U8 snoRNA. This Homo sapiens (Human) protein is Diphosphoinositol polyphosphate phosphohydrolase NUDT4B.